A 432-amino-acid polypeptide reads, in one-letter code: CLOCK-interacting pacemaker (432 aa).

2 disordered regions span residues 71–98 and 194–315; these read ADSDKDSGFSDGSSECLSSAEQMESEDM and SYTK…SSPL. At Ser-246 the chain carries Phosphoserine. The span at 272–283 shows a compositional bias: polar residues; the sequence is SPQTLQPVSSSH. Residues 364–395 are a coiled coil; the sequence is EITLKTKELIRQNQATQAELDQLKEQTQMFIE. The disordered stretch occupies residues 408-432; the sequence is LQASLTSGSSHSGSDLDTLSDHPDV. A compositionally biased stretch (low complexity) spans 411–424; it reads SLTSGSSHSGSDLD.

Interacts with CLOCK. Forms a ternary complex with the CLOCK-BMAL1 heterodimer. Interacts with CAD and HSPA5. In terms of tissue distribution, expressed in the heart, kidney and liver and shows a circadian oscillation in these tissues with a peak at circadian time 14 hours (at protein level). Expressed in the brain, including the suprachiasmatic nucleus (SCN) of the brain, and in multiple peripheral tissues such as heart, liver and kidney. Exhibits a circadian oscillation in the peripheral tissues with a peak at circadian time 14 hours.

It localises to the nucleus. It is found in the cytoplasm. The protein localises to the cytosol. Transcriptional repressor which may act as a negative-feedback regulator of CLOCK-BMAL1 transcriptional activity in the circadian-clock mechanism. May stimulate BMAL1-dependent phosphorylation of CLOCK. However, the physiological relevance of these observations is unsure, since experiments in knockout mice showed that CIPC is not critially required for basic circadian clock. The protein is CLOCK-interacting pacemaker (Cipc) of Mus musculus (Mouse).